A 107-amino-acid polypeptide reads, in one-letter code: Thioredoxin (107 aa).

Positions 2–107 constitute a Thioredoxin domain; it reads SEVLHINDAD…QLANFINQHI (106 aa). Cysteine 32 and cysteine 35 are disulfide-bonded.

The protein belongs to the thioredoxin family.

Its function is as follows. Participates in various redox reactions through the reversible oxidation of its active center dithiol to a disulfide and catalyzes dithiol-disulfide exchange reactions. This is Thioredoxin (trxA) from Haemophilus influenzae (strain ATCC 51907 / DSM 11121 / KW20 / Rd).